The sequence spans 473 residues: Cysteine--tRNA ligase (473 aa).

Cys-28 is a binding site for Zn(2+). The 'HIGH' region signature appears at 30–40 (MTVYDYCHLGH). The Zn(2+) site is built by Cys-209, His-234, and Glu-238. Positions 282–286 (KMSKS) match the 'KMSKS' region motif. Position 285 (Lys-285) interacts with ATP.

This sequence belongs to the class-I aminoacyl-tRNA synthetase family. In terms of assembly, monomer. Zn(2+) serves as cofactor.

Its subcellular location is the cytoplasm. The enzyme catalyses tRNA(Cys) + L-cysteine + ATP = L-cysteinyl-tRNA(Cys) + AMP + diphosphate. This is Cysteine--tRNA ligase from Neisseria gonorrhoeae (strain ATCC 700825 / FA 1090).